The primary structure comprises 867 residues: GATOR2 complex protein Mio (867 aa).

5 WD repeats span residues 51–86, 100–144, 149–188, 190–228, and 231–272; these read ANES…GICN, RQQR…PKET, GVGE…ATCQ, IQTK…SPLR, and QSSK…TDNS. A compositionally biased stretch (low complexity) spans 350 to 376; that stretch reads PASPTSTAATPTQQQPTSSCSTNSGSS. The interval 350 to 378 is disordered; sequence PASPTSTAATPTQQQPTSSCSTNSGSSLD. The C4-type zinc-finger motif lies at 739 to 777; it reads LSCNFCGKSVSNALLDEPRPRSTTTSTNRLSSCPSCRKP. Cys741, Cys744, Cys771, Cys774, Cys784, Cys821, Cys824, His826, His829, His832, Cys843, Cys848, and Cys852 together coordinate Zn(2+). The RING-type; atypical zinc-finger motif lies at 778 to 857; sequence LPRCSLCLMH…CNCRCFDMDG (80 aa).

The protein belongs to the WD repeat mio family. Component of the GATOR complex consisting of mio, Nup44A/Seh1, Im11, Nplr3, Nplr2, Wdr24, Wdr59 and Sec13. Within the GATOR complex, probable component of the GATOR2 subcomplex which is likely composed of mio, Nup44A/Seh1, Wdr24, Wdr59 and Sec13. Interacts with Wdr24. Interacts with nucleoporin Nup44A/Seh1. The GATOR2 complex associates with unmet in the absence of S-adenosyl-L-methionine; the mio-Wdr24-Nup44A subcomplex is essential and sufficient for this interaction while Wdr59 and Sec13 are dispensable. This association acts as a nutrient sensor to inhibit mTORC1 signaling in the absence of methionine. In terms of tissue distribution, present in the oocyte.

It localises to the nucleus. The protein resides in the lysosome. Functionally, an essential component of the GATOR subcomplex GATOR2 which functions as an activator of the amino acid-sensing branch of the mTORC1 signaling pathway. The two GATOR subcomplexes, GATOR1 and GATOR2, regulate the mTORC1 pathway in order to mediate metabolic homeostasis, female gametogenesis and the response to amino acid limitation and complete starvation. GATOR2 activates the mTORC1 signaling pathway through the inhibition of the GATOR1 subcomplex, controlling the switch to cell proliferation and growth under nutrient replete conditions and during female oocyte development. This component is required for activating mTORC1 specifically in germline cells to promote cell growth and maintain the oocyte fate. GATOR1 and GATOR2 act at different stages of oogenesis to regulate mTORC1 in order to control meiotic entry and promote oocyte growth and development. After exactly four mitotic cyst divisions, the GATOR1 complex members (Iml1, Nprl2 and Nprl3) down-regulate mTORC1 to slow cellular metabolism and promote the mitotic/meiotic transition. At later stages of oogenesis, the mio and Nup44A components of the GATOR2 complex inhibit GATOR1 and thus activate mTORC1 to promote meiotic progression, and drive oocyte growth and development. In addition to its role in the regulation of the mTORC1 complex, functions independently of mTORC1 to prevent the inappropriate accumulation of autolysosomes in germline tissues. The polypeptide is GATOR2 complex protein Mio (Drosophila melanogaster (Fruit fly)).